The chain runs to 443 residues: Methyl-coenzyme M reductase II subunit beta (443 aa).

A coenzyme M-binding site is contributed by tyrosine 367. Glycine 369 is a binding site for coenzyme B.

It belongs to the methyl-coenzyme M reductase beta subunit family. MCR is a hexamer of two alpha, two beta, and two gamma chains, forming a dimer of heterotrimers. The cofactor is coenzyme F430.

The catalysed reaction is coenzyme B + methyl-coenzyme M = methane + coenzyme M-coenzyme B heterodisulfide. It participates in one-carbon metabolism; methyl-coenzyme M reduction; methane from methyl-coenzyme M: step 1/1. Component of the methyl-coenzyme M reductase (MCR) I that catalyzes the reductive cleavage of methyl-coenzyme M (CoM-S-CH3 or 2-(methylthio)ethanesulfonate) using coenzyme B (CoB or 7-mercaptoheptanoylthreonine phosphate) as reductant which results in the production of methane and the mixed heterodisulfide of CoB and CoM (CoM-S-S-CoB). This is the final step in methanogenesis. The protein is Methyl-coenzyme M reductase II subunit beta of Methanothermobacter marburgensis (strain ATCC BAA-927 / DSM 2133 / JCM 14651 / NBRC 100331 / OCM 82 / Marburg) (Methanobacterium thermoautotrophicum).